Here is a 320-residue protein sequence, read N- to C-terminus: MPKKKTGARKKAENRREREKQLRASRSTIDLAKHPCNASMECDKCQRRQKNRAFCYFCNSVQKLPICAQCGKTKCMMKSSDCVIKHAGVYSTGLAMVGAICDFCEAWVCHGRKCLSTHACACPLTDAECVECERGVWDHGGRIFSCSFCHNFLCEDDQFEHQASCQVLEAETFKCVSCNRLGQHSCLRCKACFCDDHTRSKVFKQEKGKQPPCPKCGHETQETKDLSMSTRSLKFGRQTGGEEGDGASGYDAYWKNLSSDKYGDTSYHDEEEDEYEAEDDEEEEDEGRKDSDTESSDLFTNLNLGRTYASGYAHYEEQEN.

Residues 1–23 (MPKKKTGARKKAENRREREKQLR) form a disordered region. The short motif at 3–11 (KKKTGARKK) is the Nuclear localization signal element. A compositionally biased stretch (basic and acidic residues) spans 10 to 22 (KKAENRREREKQL). C4-type zinc fingers lie at residues 42 to 58 (CDKC…CYFC), 67 to 104 (CAQC…CDFC), 129 to 149 (CVEC…CSFC), and 175 to 189 (CVSC…CLRC). The tract at residues 206 to 320 (EKGKQPPCPK…GYAHYEEQEN (115 aa)) is disordered. The span at 216–225 (CGHETQETKD) shows a compositional bias: basic and acidic residues. The segment covering 269–285 (DEEEDEYEAEDDEEEED) has biased composition (acidic residues). Residue Ser291 is modified to Phosphoserine.

This sequence belongs to the NOA36 family. As to expression, widely expressed. Higher expression seen in heart and skeletal muscle.

Its subcellular location is the nucleus. The protein localises to the nucleolus. The protein resides in the chromosome. It localises to the centromere. The polypeptide is Zinc finger protein 330 (ZNF330) (Homo sapiens (Human)).